Here is a 148-residue protein sequence, read N- to C-terminus: HTH-type transcriptional regulator Ptr1 (148 aa).

The 62-residue stretch at 2–63 (LDRIDLKILR…SINPKNLGFE (62 aa)) folds into the HTH asnC-type domain. Positions 21–40 (FREIGRELGISEGTVRNRVK) form a DNA-binding region, H-T-H motif.

Homodimer.

In terms of biological role, participates in positive as well as negative regulation of transcription. Binds to its own promoter. The sequence is that of HTH-type transcriptional regulator Ptr1 (ptr1) from Methanocaldococcus jannaschii (strain ATCC 43067 / DSM 2661 / JAL-1 / JCM 10045 / NBRC 100440) (Methanococcus jannaschii).